The chain runs to 74 residues: MKLSFCFFLCAIVLFSFAEARINPNQLKRLRELVRDDEPTYCIELGERCPNPREGDWCCHKCVPEGKRFYCRDQ.

The N-terminal stretch at 1 to 20 is a signal peptide; sequence MKLSFCFFLCAIVLFSFAEA. Residues 21–39 constitute a propeptide that is removed on maturation; sequence RINPNQLKRLRELVRDDEP. 3 cysteine pairs are disulfide-bonded: Cys-42/Cys-59, Cys-49/Cys-62, and Cys-58/Cys-71.

As to expression, expressed by the venom gland.

It localises to the secreted. The chain is U2-sicaritoxin-Sdo1a from Hexophthalma dolichocephala (Afrotropical spider).